The primary structure comprises 415 residues: Serine hydroxymethyltransferase 2 (415 aa).

Residues L121 and 125–127 (GHL) contribute to the (6S)-5,6,7,8-tetrahydrofolate site. K229 carries the post-translational modification N6-(pyridoxal phosphate)lysine.

It belongs to the SHMT family. As to quaternary structure, homodimer. Pyridoxal 5'-phosphate is required as a cofactor.

Its subcellular location is the cytoplasm. It carries out the reaction (6R)-5,10-methylene-5,6,7,8-tetrahydrofolate + glycine + H2O = (6S)-5,6,7,8-tetrahydrofolate + L-serine. The protein operates within one-carbon metabolism; tetrahydrofolate interconversion. It participates in amino-acid biosynthesis; glycine biosynthesis; glycine from L-serine: step 1/1. Its function is as follows. Catalyzes the reversible interconversion of serine and glycine with tetrahydrofolate (THF) serving as the one-carbon carrier. This reaction serves as the major source of one-carbon groups required for the biosynthesis of purines, thymidylate, methionine, and other important biomolecules. Also exhibits THF-independent aldolase activity toward beta-hydroxyamino acids, producing glycine and aldehydes, via a retro-aldol mechanism. The chain is Serine hydroxymethyltransferase 2 from Bordetella bronchiseptica (strain ATCC BAA-588 / NCTC 13252 / RB50) (Alcaligenes bronchisepticus).